Reading from the N-terminus, the 127-residue chain is Holo-[acyl-carrier-protein] synthase (127 aa).

Mg(2+)-binding residues include Asp-9 and Glu-58.

Belongs to the P-Pant transferase superfamily. AcpS family. The cofactor is Mg(2+).

It localises to the cytoplasm. The enzyme catalyses apo-[ACP] + CoA = holo-[ACP] + adenosine 3',5'-bisphosphate + H(+). Transfers the 4'-phosphopantetheine moiety from coenzyme A to a Ser of acyl-carrier-protein. The protein is Holo-[acyl-carrier-protein] synthase of Shewanella baltica (strain OS223).